The primary structure comprises 377 residues: Homoserine O-succinyltransferase (377 aa).

Residues 50–358 (NAVLICHALS…PSSYGHDSFL (309 aa)) form the AB hydrolase-1 domain. S156 acts as the Nucleophile in catalysis. R226 provides a ligand contact to substrate. Catalysis depends on residues D321 and H354. Residue D355 participates in substrate binding.

It belongs to the AB hydrolase superfamily. MetX family. As to quaternary structure, homodimer.

The protein resides in the cytoplasm. It catalyses the reaction L-homoserine + succinyl-CoA = O-succinyl-L-homoserine + CoA. Its pathway is amino-acid biosynthesis; L-methionine biosynthesis via de novo pathway; O-succinyl-L-homoserine from L-homoserine: step 1/1. Its function is as follows. Transfers a succinyl group from succinyl-CoA to L-homoserine, forming succinyl-L-homoserine. The sequence is that of Homoserine O-succinyltransferase from Nitrosomonas europaea (strain ATCC 19718 / CIP 103999 / KCTC 2705 / NBRC 14298).